The sequence spans 149 residues: Large ribosomal subunit protein eL19 (149 aa).

Residues E46–I99 form a disordered region. Positions S59–S85 are enriched in basic residues. A compositionally biased stretch (basic and acidic residues) spans Q89 to I99.

It belongs to the eukaryotic ribosomal protein eL19 family. In terms of assembly, part of the 50S ribosomal subunit.

In terms of biological role, binds to the 23S rRNA. The chain is Large ribosomal subunit protein eL19 from Natronomonas pharaonis (strain ATCC 35678 / DSM 2160 / CIP 103997 / JCM 8858 / NBRC 14720 / NCIMB 2260 / Gabara) (Halobacterium pharaonis).